The following is a 336-amino-acid chain: tRNA N6-adenosine threonylcarbamoyltransferase (336 aa).

Residues H114 and H118 each coordinate Fe cation. Substrate is bound by residues 136 to 140, D169, G182, D186, and N275; that span reads LVSGG. D301 lines the Fe cation pocket.

It belongs to the KAE1 / TsaD family. Requires Fe(2+) as cofactor.

It is found in the cytoplasm. The enzyme catalyses L-threonylcarbamoyladenylate + adenosine(37) in tRNA = N(6)-L-threonylcarbamoyladenosine(37) in tRNA + AMP + H(+). In terms of biological role, required for the formation of a threonylcarbamoyl group on adenosine at position 37 (t(6)A37) in tRNAs that read codons beginning with adenine. Is involved in the transfer of the threonylcarbamoyl moiety of threonylcarbamoyl-AMP (TC-AMP) to the N6 group of A37, together with TsaE and TsaB. TsaD likely plays a direct catalytic role in this reaction. This Streptococcus pneumoniae (strain P1031) protein is tRNA N6-adenosine threonylcarbamoyltransferase.